The chain runs to 369 residues: Protein-glutamate methylesterase/protein-glutamine glutaminase 1 (369 aa).

The Response regulatory domain occupies 11 to 128 (RVLIVDDSAA…DLERQEASIR (118 aa)). 4-aspartylphosphate is present on Asp-62. The disordered stretch occupies residues 136–168 (ATETTRRRSQPEPRPLAPGPKLTADEILPARPP). The 189-residue stretch at 170–358 (PVPETMPVVC…LDRLAARIME (189 aa)) folds into the CheB-type methylesterase domain. Active-site residues include Ser-183, His-209, and Asp-305.

This sequence belongs to the CheB family. Post-translationally, phosphorylated by CheA. Phosphorylation of the N-terminal regulatory domain activates the methylesterase activity.

Its subcellular location is the cytoplasm. The enzyme catalyses [protein]-L-glutamate 5-O-methyl ester + H2O = L-glutamyl-[protein] + methanol + H(+). The catalysed reaction is L-glutaminyl-[protein] + H2O = L-glutamyl-[protein] + NH4(+). Involved in chemotaxis. Part of a chemotaxis signal transduction system that modulates chemotaxis in response to various stimuli. Catalyzes the demethylation of specific methylglutamate residues introduced into the chemoreceptors (methyl-accepting chemotaxis proteins or MCP) by CheR. Also mediates the irreversible deamidation of specific glutamine residues to glutamic acid. This chain is Protein-glutamate methylesterase/protein-glutamine glutaminase 1, found in Cereibacter sphaeroides (strain ATCC 17023 / DSM 158 / JCM 6121 / CCUG 31486 / LMG 2827 / NBRC 12203 / NCIMB 8253 / ATH 2.4.1.) (Rhodobacter sphaeroides).